A 163-amino-acid polypeptide reads, in one-letter code: Nucleotide-binding protein MAV_4575 (163 aa).

This sequence belongs to the YajQ family.

Functionally, nucleotide-binding protein. This is Nucleotide-binding protein MAV_4575 from Mycobacterium avium (strain 104).